The primary structure comprises 436 residues: MAVTVETLEKLERKMTLTLPLNTIQSEVDTRLKRLARTVKMDGFRPGKVPMNVVAQRYGYSVHYEVMNDKVGEAFAVAANEAKLRVAGQPRISEKEGAPEGELVFDAVFEVYPDVKIADLTQAEVEKVSAEVSDAAIDKTVDILRKQRRTFAQRAADAPAQDGDRATIDFEGKIDGETFAGGKAEDFQFLVGEGQMLKEFEDAVRGMKSGESKTFPLNFPADYHGKDVAGKQADFLVTVKKIEAAHLPEVNEALAKSLGIADGTVEALRADIKKNLEREVKFRLLARNKNAVMDALVANAELELPKSSVQAEVDRMIEGARADLKQRGIKDADKAPIPDDVFRPQAEKRVRLGLVVAELVRANGLQAKPEQLKAHIEELAASYEKPQDVVRWYLGDNRRMAEVEAVVIENNVTEFVLGKAKVNDKAISFDDLMGQN.

One can recognise a PPIase FKBP-type domain in the interval 163–248 (GDRATIDFEG…VKKIEAAHLP (86 aa)).

It belongs to the FKBP-type PPIase family. Tig subfamily.

It localises to the cytoplasm. The catalysed reaction is [protein]-peptidylproline (omega=180) = [protein]-peptidylproline (omega=0). Its function is as follows. Involved in protein export. Acts as a chaperone by maintaining the newly synthesized protein in an open conformation. Functions as a peptidyl-prolyl cis-trans isomerase. The chain is Trigger factor from Polaromonas sp. (strain JS666 / ATCC BAA-500).